We begin with the raw amino-acid sequence, 365 residues long: Selina-4(15),7(11)-diene synthase ((2E,6E)-farnesyl diphosphate cyclizing) (365 aa).

2 residues coordinate Mg(2+): aspartate 82 and glutamate 87. Residues 82 to 87 (DDGHCE) carry the DDXXXE motif motif. Arginine 178 contacts substrate. 2 residues coordinate Mg(2+): asparagine 224 and serine 228. Lysine 231 is a binding site for substrate. Glutamate 232 contacts Mg(2+). 310–311 (RY) is a substrate binding site.

Belongs to the terpene synthase family. Monomer. The cofactor is Mg(2+).

The catalysed reaction is (2E,6E)-farnesyl diphosphate = selina-4(15),7(11)-diene + diphosphate. Its pathway is secondary metabolite biosynthesis; terpenoid biosynthesis. In terms of biological role, catalyzes the conversion of (2E,6E)-farnesyl diphosphate (FPP) to yield the bicyclic sesquiterpene selina-4(15),7(11)-diene via a 1,10-cyclization, which requires the abstraction of the pyrophosphate from FPP leading to a (E,E)-germacradienyl cation. The only accepted substrate is (2E,6E)-farnesyl diphosphate (FPP). The sequence is that of Selina-4(15),7(11)-diene synthase ((2E,6E)-farnesyl diphosphate cyclizing) from Streptomyces pristinaespiralis (strain ATCC 25486 / DSM 40338 / CBS 914.69 / JCM 4507 / KCC S-0507 / NBRC 13074 / NRRL 2958 / 5647).